A 507-amino-acid chain; its full sequence is Histidine ammonia-lyase (507 aa).

Residues 141 to 143 (ASG) constitute a cross-link (5-imidazolinone (Ala-Gly)). 2,3-didehydroalanine (Ser) is present on S142.

Belongs to the PAL/histidase family. Post-translationally, contains an active site 4-methylidene-imidazol-5-one (MIO), which is formed autocatalytically by cyclization and dehydration of residues Ala-Ser-Gly.

Its subcellular location is the cytoplasm. It catalyses the reaction L-histidine = trans-urocanate + NH4(+). It functions in the pathway amino-acid degradation; L-histidine degradation into L-glutamate; N-formimidoyl-L-glutamate from L-histidine: step 1/3. This is Histidine ammonia-lyase from Burkholderia pseudomallei (strain 668).